The following is a 389-amino-acid chain: Chalcone synthase E (389 aa).

Cys-164 is a catalytic residue.

It belongs to the thiolase-like superfamily. Chalcone/stilbene synthases family.

It catalyses the reaction (E)-4-coumaroyl-CoA + 3 malonyl-CoA + 3 H(+) = 2',4,4',6'-tetrahydroxychalcone + 3 CO2 + 4 CoA. It functions in the pathway secondary metabolite biosynthesis; flavonoid biosynthesis. Functionally, the primary product of this enzyme is 4,2',4',6'-tetrahydroxychalcone (also termed naringenin-chalcone or chalcone) which can under specific conditions spontaneously isomerize into naringenin. The sequence is that of Chalcone synthase E (CHSE) from Ipomoea nil (Japanese morning glory).